We begin with the raw amino-acid sequence, 706 residues long: G2/M phase-specific E3 ubiquitin-protein ligase (706 aa).

The C2HC pre-PHD-type zinc-finger motif lies at 11 to 51 (NLACVFCRKHDDCPNKYGEKKTKEKWNLTVHYYCLLMSSGI). A PHD-type 1 zinc finger spans residues 79-128 (LKCCVCKKNGASIGCVAPRCKRSYHFPCGLQRECIFQFTGNFASFCWDHR). The PHD-type 2; degenerate zinc-finger motif lies at 143–193 (PCTICLEFIEPIPSYNILRSPCCKNAWFHRDCLQVQAINAGVFFFRCTICN). The PHD-type 3 zinc-finger motif lies at 237 to 286 (RCRCKEGRDYNAPDSKWEIKRCQCCGSSGTHLACSSLRSWEQNWECLECR). An HECT domain is found at 371–698 (IWNSALDAFR…IRNTLRLEKE (328 aa)).

As to expression, predominantly expressed in brain, liver, kidney, testes and ovary.

The protein resides in the nucleus. It is found in the nucleolus. Its subcellular location is the cytoplasm. It catalyses the reaction S-ubiquitinyl-[E2 ubiquitin-conjugating enzyme]-L-cysteine + [acceptor protein]-L-lysine = [E2 ubiquitin-conjugating enzyme]-L-cysteine + N(6)-ubiquitinyl-[acceptor protein]-L-lysine.. Its pathway is protein modification; protein ubiquitination. In terms of biological role, E3 ubiquitin-protein ligase which accepts ubiquitin from an E2 ubiquitin-conjugating enzyme in the form of a thioester and then directly transfers the ubiquitin to targeted substrates. Essential in early embryonic development to prevent apoptotic death. The chain is G2/M phase-specific E3 ubiquitin-protein ligase (G2E3) from Homo sapiens (Human).